Consider the following 257-residue polypeptide: Acetylglutamate kinase (257 aa).

Residues Gly43–Gly44, Arg65, and Asn157 each bind substrate. ATP contacts are provided by residues Asp180–Leu185 and Ile208–Thr210.

It belongs to the acetylglutamate kinase family. ArgB subfamily. Homodimer.

It is found in the cytoplasm. It catalyses the reaction N-acetyl-L-glutamate + ATP = N-acetyl-L-glutamyl 5-phosphate + ADP. It functions in the pathway amino-acid biosynthesis; L-arginine biosynthesis; N(2)-acetyl-L-ornithine from L-glutamate: step 2/4. In terms of biological role, catalyzes the ATP-dependent phosphorylation of N-acetyl-L-glutamate. The protein is Acetylglutamate kinase of Serratia proteamaculans (strain 568).